The following is a 293-amino-acid chain: Ribosomal protein L11 methyltransferase (293 aa).

S-adenosyl-L-methionine is bound by residues Thr145, Gly166, Asp188, and Asn230.

This sequence belongs to the methyltransferase superfamily. PrmA family.

The protein localises to the cytoplasm. It catalyses the reaction L-lysyl-[protein] + 3 S-adenosyl-L-methionine = N(6),N(6),N(6)-trimethyl-L-lysyl-[protein] + 3 S-adenosyl-L-homocysteine + 3 H(+). Its function is as follows. Methylates ribosomal protein L11. This is Ribosomal protein L11 methyltransferase from Shewanella woodyi (strain ATCC 51908 / MS32).